The chain runs to 262 residues: MSTLDTPLVVAGKTYHSRLMVGTGKYQDLEETQNAIQASGAEIVTIAIRRSNIGQNPGEPNLLDVISPHCYTLLPNTAGCYNAKEAVRTCRLARELLDGHSLVKLEVLGDEKTLFPDLVETYQAAEVLIKEDFQVMVYTNDDPIAAKRLEEMGCVAVMPLAAPIGSGLGIRNPYNILEIVQNATVPILVDAGVGTASDAAVAMELGCDGVLMNTAIAGAQNPILMASAMKKAVEAGRDAYLAGRIPRRRYASASSPLEGTFF.

Catalysis depends on lysine 104, which acts as the Schiff-base intermediate with DXP. Residues glycine 165, alanine 191 to glycine 192, and asparagine 213 to threonine 214 contribute to the 1-deoxy-D-xylulose 5-phosphate site.

Belongs to the ThiG family. As to quaternary structure, homotetramer. Forms heterodimers with either ThiH or ThiS.

It localises to the cytoplasm. It catalyses the reaction [ThiS sulfur-carrier protein]-C-terminal-Gly-aminoethanethioate + 2-iminoacetate + 1-deoxy-D-xylulose 5-phosphate = [ThiS sulfur-carrier protein]-C-terminal Gly-Gly + 2-[(2R,5Z)-2-carboxy-4-methylthiazol-5(2H)-ylidene]ethyl phosphate + 2 H2O + H(+). The protein operates within cofactor biosynthesis; thiamine diphosphate biosynthesis. Functionally, catalyzes the rearrangement of 1-deoxy-D-xylulose 5-phosphate (DXP) to produce the thiazole phosphate moiety of thiamine. Sulfur is provided by the thiocarboxylate moiety of the carrier protein ThiS. In vitro, sulfur can be provided by H(2)S. The protein is Thiazole synthase of Nitrosococcus oceani (strain ATCC 19707 / BCRC 17464 / JCM 30415 / NCIMB 11848 / C-107).